Reading from the N-terminus, the 294-residue chain is Cytidine deaminase (294 aa).

CMP/dCMP-type deaminase domains are found at residues aspartate 48 to asparagine 168 and glutamate 187 to phenylalanine 294. Asparagine 89–glutamate 91 lines the substrate pocket. Histidine 102 is a binding site for Zn(2+). Glutamate 104 functions as the Proton donor in the catalytic mechanism. Positions 129 and 132 each coordinate Zn(2+).

Belongs to the cytidine and deoxycytidylate deaminase family. As to quaternary structure, homodimer. Zn(2+) serves as cofactor.

The enzyme catalyses cytidine + H2O + H(+) = uridine + NH4(+). It carries out the reaction 2'-deoxycytidine + H2O + H(+) = 2'-deoxyuridine + NH4(+). This enzyme scavenges exogenous and endogenous cytidine and 2'-deoxycytidine for UMP synthesis. The polypeptide is Cytidine deaminase (Photorhabdus laumondii subsp. laumondii (strain DSM 15139 / CIP 105565 / TT01) (Photorhabdus luminescens subsp. laumondii)).